The chain runs to 199 residues: Probable septum site-determining protein MinC (199 aa).

This sequence belongs to the MinC family. Interacts with MinD and FtsZ.

Functionally, cell division inhibitor that blocks the formation of polar Z ring septums. Rapidly oscillates between the poles of the cell to destabilize FtsZ filaments that have formed before they mature into polar Z rings. Prevents FtsZ polymerization. This Persephonella marina (strain DSM 14350 / EX-H1) protein is Probable septum site-determining protein MinC.